The chain runs to 36 residues: Termicin (36 aa).

3 disulfide bridges follow: C2/C24, C7/C29, and C11/C31. G36 is subject to Glycine amide.

Expressed in salivary glands and hemocytes.

It localises to the secreted. Weak activity against Gram-positive bacteria B.megaterium, S.pyogenes and M.luteus, strong activity against yeasts C.albicans, C.neoformans and S.cerevisiae and filamentous fungi F.oxysporum, F.culmorum, N.crassa and N.hematococca. Less active against filamentous fungus T.viride. Inactive against Gram-positive bacteria A.viridans and S.aureus, filamentous fungi A.fumigatus and B.bassiana and yeast C.glabrata. This chain is Termicin, found in Pseudacanthotermes spiniger.